Consider the following 342-residue polypeptide: Ribosomal RNA small subunit methyltransferase C (342 aa).

The protein belongs to the methyltransferase superfamily. RsmC family. In terms of assembly, monomer.

It localises to the cytoplasm. The enzyme catalyses guanosine(1207) in 16S rRNA + S-adenosyl-L-methionine = N(2)-methylguanosine(1207) in 16S rRNA + S-adenosyl-L-homocysteine + H(+). In terms of biological role, specifically methylates the guanine in position 1207 of 16S rRNA in the 30S particle. This is Ribosomal RNA small subunit methyltransferase C from Salmonella typhi.